Consider the following 95-residue polypeptide: Mammaglobin-B (95 aa).

A signal peptide spans 1 to 18; the sequence is MKLLMVLMLAALLLHCYA. N-linked (GlcNAc...) asparagine glycosylation is present at Asn-68.

Heterodimer of a lipophilin A and a lipophilin C (mammaglobin B) monomer associated head to head. Expressed in thymus, trachea, kidney, steroid responsive tissues (prostate, testis, uterus, breast and ovary) and salivary gland.

The protein resides in the secreted. May bind androgens and other steroids, may also bind estramustine, a chemotherapeutic agent used for prostate cancer. May be under transcriptional regulation of steroid hormones. This chain is Mammaglobin-B (SCGB2A1), found in Homo sapiens (Human).